A 381-amino-acid polypeptide reads, in one-letter code: 5-amino-6-(D-ribitylamino)uracil--L-tyrosine 4-hydroxyphenyl transferase (381 aa).

The Radical SAM core domain maps to 59 to 306; that stretch reads VTYVVNRNIN…TAVARIFLGN (248 aa). Residues Cys73, Cys77, and Cys80 each contribute to the [4Fe-4S] cluster site.

It belongs to the radical SAM superfamily. CofH family. Consists of two subunits, CofG and CofH. [4Fe-4S] cluster is required as a cofactor.

The enzyme catalyses 5-amino-6-(D-ribitylamino)uracil + L-tyrosine + S-adenosyl-L-methionine = 5-amino-5-(4-hydroxybenzyl)-6-(D-ribitylimino)-5,6-dihydrouracil + 2-iminoacetate + 5'-deoxyadenosine + L-methionine + H(+). The protein operates within cofactor biosynthesis; coenzyme F0 biosynthesis. Its function is as follows. Catalyzes the radical-mediated synthesis of 5-amino-5-(4-hydroxybenzyl)-6-(D-ribitylimino)-5,6-dihydrouracil from 5-amino-6-(D-ribitylamino)uracil and L-tyrosine. The protein is 5-amino-6-(D-ribitylamino)uracil--L-tyrosine 4-hydroxyphenyl transferase of Cyanothece sp. (strain PCC 7425 / ATCC 29141).